Reading from the N-terminus, the 826-residue chain is Sister chromatid cohesion protein PDS5 homolog D (826 aa).

HEAT repeat units follow at residues 18–54 (GTNLLSPPSSTDDLLTLLDETESLLKNVEQDQPLSMQ), 55–94 (SALIPSRNALVSVDLLSHPDSDVRVSVVSCLTEIVRITAP), 151–188 (DLILQMFRNFFKFIRSDHPQLVFSSMELIMIAIIDETE), 189–226 (QVSTDLLDSLLATVKKENQNVSPMSWSLAEKVLSRCAR), and 230–267 (PYIIEALKSRGTSLDMYSPVVSSICQSVFNTPKVHSPV). Disordered regions lie at residues 261–551 (PKVH…EVES) and 640–826 (KKSK…KRKS). 2 stretches are compositionally biased toward basic and acidic residues: residues 269-286 (TKEHEEKLDLGHSRKENL) and 296-309 (RHETRGINEKEKVR). Residues 281–288 (SRKENLSK) carry the Nuclear localization signal 1 motif. Residues 311–323 (GNKSSLLKQSLKQ) show a composition bias toward polar residues. A Nuclear localization signal 2 motif is present at residues 357 to 364 (GKRDPLKT). Residues 396–408 (SPATSSRSLTGSL) are compositionally biased toward polar residues. The stretch at 424-461 (SLSSPRLKKLASCFRDEEPNQEDDRKIGNSSKQTRSKN) is one HEAT 6 repeat. The segment covering 437–450 (FRDEEPNQEDDRKI) has biased composition (basic and acidic residues). Residues 451-460 (GNSSKQTRSK) are compositionally biased toward polar residues. Positions 644–663 (NVAVSVEPTSSSGVRSSSRT) are enriched in low complexity. A compositionally biased stretch (basic and acidic residues) spans 665-701 (MKKDCGKRLNKQVEKTREGKNLRSLKELNAETDRTAE). The segment covering 702-724 (EQEVSLEAESDDRSEEQEYEDDC) has biased composition (acidic residues). Residues 725 to 746 (SDKKEQSQDKGVEAETKEEEKQ) are compositionally biased toward basic and acidic residues. 3 stretches are compositionally biased toward acidic residues: residues 752-763 (GESEGEDSESEE), 771-800 (DDMEDDEEEEEEEIDHMEDEAEEEKEEVDD), and 811-826 (EKEEEEEEEDEEKRKS). Residues 770–825 (TDDMEDDEEEEEEEIDHMEDEAEEEKEEVDDKEASANMSEIEKEEEEEEEDEEKRK) are a coiled coil.

Belongs to the PDS5 family. As to quaternary structure, interacts with the cohesin complex.

The protein resides in the nucleus. In terms of biological role, cohesin cofactor dispensable during the meiotic division but playing an important role in DNA repair by homologous recombination (HR) probably by helping SMC5/SMC6 complex. Regulator of sister chromatid cohesion in mitosis which may stabilize cohesin complex association with chromatin. May couple sister chromatid cohesion during mitosis to DNA replication. Cohesion ensures that chromosome partitioning is accurate in both meiotic and mitotic cells and plays an important role in DNA repair. The chain is Sister chromatid cohesion protein PDS5 homolog D from Arabidopsis thaliana (Mouse-ear cress).